The sequence spans 1001 residues: MEGQSRSGSAKSGTRTGLGPLPGTHGALQTGTPSKKVNSSFQLPAKNTGPTPSEPRLALAPVGPRAAVSPPSERPRLALSSPRPILAPLSTAGEQKRPPPHRSSKPAPTSVGQLVVSAAAGPKPPPVASVSILAPKSLGQLVISASAMPRPTPAPLGPILSPTSRDQKQLSPTSVGPKPALATSGLSLALASQEQPPQSPSSPSPVPSPVLSPSQESHLAPATVTSTPASERQLPARQKDTAVRRPIPPADGCLHTPVQAAGLATSPPRAQTSSDPRLSPSFRARPEAPRHSPEDPVLPPPPQTLPLDVSSGLPESGTRSPGLLSPTFRPGIPSNQTVPPPLPKPPRSPSRSPSRSPNRSPCVPPAPEVALPRPVTQGAGPGKCPSPNLQTQESPVATATSPTSSWSAQPTCKSDPGFRITVVTWNVGTAMPPDDVTSLLHLGGGHDSDGADMIAIGLQEVNSMINKRLKDALFTDQWSELFMDALGPFNFVLVSTVRMQGVILLLFAKYYHLPFLRDVQTDCTRTGLGGYWGNKGGVSVRLAAFGHMLCFLNCHLPAHMDKAEQRKDNFQTILSLQQFQGPGAHGILDHDLVFWFGDLNFRIESYDLHFVKFAIDSNQLHQLWEKDQLNMAKNTWPILKGFQEGPLNFAPTFKFDVGTNKYDTSAKKRKPAWTDRILWKVKAPSGGPSPSGRESHRLQVTQHSYRSHMEYTVSDHKPVAARFLLQFAFRDDVPLVRLEVADEWARPEQAVVRYRVETVFARSSWDWIGLYRVGFRHCKDYVAYVWAKHEEVDGNIYQVTFSEESLPKGHGDFILGYYSHHHSILIGVTEPFQISLPTSESASSSTDSSGTSSEGEDDSTLELLAPKSRSPSPGKSKRHRSRSPGLARFPSLALRPSSRERRGGSRSPSPQSRQLPRVAPDRGHSSGSRGSSEEGPSGPPGPWAFPPAVPRSLGLLPALRLETVDPGGGGSWGPDQEAPDPNSLSPSPQGRLGLEDGGLGP.

Polar residues predominate over residues 1–12 (MEGQSRSGSAKS). Disordered regions lie at residues 1–130 (MEGQ…VASV) and 144–412 (SASA…QPTC). An RSXSXX motif 1 motif is present at residues 6–11 (RSGSAK). Positions 13–28 (GTRTGLGPLPGTHGAL) are enriched in low complexity. Residues 29 to 42 (QTGTPSKKVNSSFQ) are compositionally biased toward polar residues. Asymmetric dimethylarginine; alternate is present on Arg56. Omega-N-methylarginine; alternate is present on Arg56. At Arg65 the chain carries Omega-N-methylarginine. Asymmetric dimethylarginine is present on Arg76. Arg83 carries the post-translational modification Asymmetric dimethylarginine; alternate. Arg83 is subject to Omega-N-methylarginine; alternate. Residues 161 to 174 (SPTSRDQKQLSPTS) show a composition bias toward polar residues. Ser171 is subject to Phosphoserine. Residues 180 to 196 (ALATSGLSLALASQEQP) are compositionally biased toward low complexity. Residues 197–210 (PQSPSSPSPVPSPV) show a composition bias toward pro residues. The span at 284 to 294 (ARPEAPRHSPE) shows a compositional bias: basic and acidic residues. A phosphoserine mark is found at Ser292 and Ser325. Residues 338–348 (VPPPLPKPPRS) are compositionally biased toward pro residues. Positions 346–351 (PRSPSR) match the SH3-binding motif. Low complexity-rich tracts occupy residues 349–361 (PSRS…NRSP) and 394–411 (SPVA…AQPT). The RSXSXX motif 2 signature appears at 351-356 (RSPSRS). Positions 420-723 (ITVVTWNVGT…SDHKPVAARF (304 aa)) are catalytic. The tract at residues 724 to 835 (LLQFAFRDDV…IGVTEPFQIS (112 aa)) is required for ruffle localization. Residues 837–1001 (PTSESASSST…LGLEDGGLGP (165 aa)) are disordered. Low complexity predominate over residues 838–853 (TSESASSSTDSSGTSS). 2 consecutive short sequence motifs (RSXSXX motif) follow at residues 869–874 (RSPSPG) and 880–885 (RSRSPG). Position 898 is a phosphoserine (Ser898). Low complexity-rich tracts occupy residues 905–917 (SRSP…QLPR) and 925–936 (SSGSRGSSEEGP). An RSXSXX motif 5 motif is present at residues 906-911 (RSPSPQ). Pro residues predominate over residues 937 to 949 (SGPPGPWAFPPAV). The residue at position 985 (Ser985) is a Phosphoserine.

This sequence belongs to the inositol 1,4,5-trisphosphate 5-phosphatase type II family. Post-translationally, phosphorylated on Ser/Thr residues. In terms of tissue distribution, expressed in heart, brain, kidney, stomach, small intestine and lung. Not expressed in spleen, thymus, skeletal muscle, testis and skin.

It is found in the cytoplasm. The enzyme catalyses 1D-myo-inositol 1,4,5-trisphosphate + H2O = 1D-myo-inositol 1,4-bisphosphate + phosphate. It catalyses the reaction 1D-myo-inositol 1,3,4,5-tetrakisphosphate + H2O = 1D-myo-inositol 1,3,4-trisphosphate + phosphate. The catalysed reaction is a 1,2-diacyl-sn-glycero-3-phospho-(1D-myo-inositol-4,5-bisphosphate) + H2O = a 1,2-diacyl-sn-glycero-3-phospho-(1D-myo-inositol 4-phosphate) + phosphate. Inositol 5-phosphatase, which converts inositol 1,4,5-trisphosphate to inositol 1,4-bisphosphate. Also converts phosphatidylinositol 4,5-bisphosphate to phosphatidylinositol 4-phosphate and inositol 1,3,4,5-tetrakisphosphate to inositol 1,3,4-trisphosphate in vitro. May be involved in modulation of the function of inositol and phosphatidylinositol polyphosphate-binding proteins that are present at membranes ruffles. The polypeptide is Phosphatidylinositol 4,5-bisphosphate 5-phosphatase A (Inpp5j) (Rattus norvegicus (Rat)).